The following is a 175-amino-acid chain: MALNVFQKQEVVKELAGVATKAYSLIVAEYAGITVSQMTAMRKQARESGVYLKVVKNKLAARALGDTEYAVIKEKLIGPLLYAFSLEDPGAAGRLIKEFSKKHDKLKSKAVSLGGVLYPAGHVDVLASLPTRLQALAMLARVLSEPVTLFARAIKAVADDKSETVAVSAPETSEA.

It belongs to the universal ribosomal protein uL10 family. As to quaternary structure, part of the ribosomal stalk of the 50S ribosomal subunit. The N-terminus interacts with L11 and the large rRNA to form the base of the stalk. The C-terminus forms an elongated spine to which L12 dimers bind in a sequential fashion forming a multimeric L10(L12)X complex.

Forms part of the ribosomal stalk, playing a central role in the interaction of the ribosome with GTP-bound translation factors. The chain is Large ribosomal subunit protein uL10 from Xylella fastidiosa (strain M12).